Reading from the N-terminus, the 354-residue chain is Uroporphyrinogen decarboxylase (354 aa).

Residues 25-29 (RQAGR), D75, Y152, T207, and H330 contribute to the substrate site.

This sequence belongs to the uroporphyrinogen decarboxylase family. Homodimer.

It localises to the cytoplasm. It catalyses the reaction uroporphyrinogen III + 4 H(+) = coproporphyrinogen III + 4 CO2. It participates in porphyrin-containing compound metabolism; protoporphyrin-IX biosynthesis; coproporphyrinogen-III from 5-aminolevulinate: step 4/4. Functionally, catalyzes the decarboxylation of four acetate groups of uroporphyrinogen-III to yield coproporphyrinogen-III. This Xanthomonas euvesicatoria pv. vesicatoria (strain 85-10) (Xanthomonas campestris pv. vesicatoria) protein is Uroporphyrinogen decarboxylase.